The following is a 149-amino-acid chain: MNVFLSKYVNGVDKKSRVSVPANYRAVLGKELFNGVIAYPSIRNNCIEVCGISHIEKLRQMIETLDPYSEERDAFETMIFGEAVQLSFDGEGRIILPQSLMKHAGIEEQACFVGKGVIFEIWQPQNFEKYLNAAQKIAHEKRLTLRNAH.

2 SpoVT-AbrB domains span residues 7–54 (KYVN…GISH) and 83–126 (AVQL…QPQN).

This sequence belongs to the MraZ family. In terms of assembly, forms oligomers.

The protein localises to the cytoplasm. The protein resides in the nucleoid. This Rickettsia rickettsii (strain Sheila Smith) protein is Transcriptional regulator MraZ.